Consider the following 248-residue polypeptide: tRNA pseudouridine synthase A (248 aa).

The Nucleophile role is filled by aspartate 54. Tyrosine 112 contacts substrate.

Belongs to the tRNA pseudouridine synthase TruA family. In terms of assembly, homodimer.

It carries out the reaction uridine(38/39/40) in tRNA = pseudouridine(38/39/40) in tRNA. Its function is as follows. Formation of pseudouridine at positions 38, 39 and 40 in the anticodon stem and loop of transfer RNAs. The polypeptide is tRNA pseudouridine synthase A (Geobacillus sp. (strain WCH70)).